Reading from the N-terminus, the 250-residue chain is tRNA (guanine-N(7)-)-methyltransferase (250 aa).

Glu79, Glu104, Asp131, and Asp154 together coordinate S-adenosyl-L-methionine. Asp154 is an active-site residue. Substrate is bound by residues Lys158, Asp190, and 228 to 231 (TKFE).

Belongs to the class I-like SAM-binding methyltransferase superfamily. TrmB family.

It carries out the reaction guanosine(46) in tRNA + S-adenosyl-L-methionine = N(7)-methylguanosine(46) in tRNA + S-adenosyl-L-homocysteine. The protein operates within tRNA modification; N(7)-methylguanine-tRNA biosynthesis. Functionally, catalyzes the formation of N(7)-methylguanine at position 46 (m7G46) in tRNA. The sequence is that of tRNA (guanine-N(7)-)-methyltransferase from Actinobacillus pleuropneumoniae serotype 5b (strain L20).